Consider the following 158-residue polypeptide: Kalata-B3/B6 (158 aa).

The N-terminal stretch at 1-22 (MAKFTKSLVLCLLLAAFVGAFG) is a signal peptide. The propeptide occupies 23–66 (AELSEADKANVVNEIAANIQREILKGVKSSETTLTMFLKEMQLK). Positions 67 to 96 (GLPTCGETCFGGTCNTPGCSCSSWPICTRN) form a cross-link, cyclopeptide (Gly-Asn). 3 disulfide bridges follow: C71–C85, C75–C87, and C80–C93. Positions 97–121 (GLPKRAGVKSSETTLTMFLKEMQLK) are excised as a propeptide. The cyclopeptide (Gly-Asp) cross-link spans 122–151 (GLPTCGETCFGGTCNTPGCTCDPWPICTRD). Cystine bridges form between C126-C140, C130-C142, and C135-C148. Positions 152–158 (GLPSAAA) are excised as a propeptide.

Belongs to the cyclotide family. Moebius subfamily. Kalata-B3 and kalata-B6 are cyclic peptides.

Functionally, probably participates in a plant defense mechanism. Has hemolytic activity. The sequence is that of Kalata-B3/B6 (OAK2) from Oldenlandia affinis.